Reading from the N-terminus, the 285-residue chain is Polyamine aminopropyltransferase (285 aa).

The region spanning 5 to 241 is the PABS domain; the sequence is DTWFTEHFQA…GWWSVTLSSK (237 aa). Glutamine 35 provides a ligand contact to S-methyl-5'-thioadenosine. Residues histidine 66 and aspartate 90 each coordinate spermidine. S-methyl-5'-thioadenosine is bound by residues aspartate 110 and 141–142; that span reads DG. The active-site Proton acceptor is the aspartate 160. 160–163 contacts spermidine; sequence DSTD. Proline 167 lines the S-methyl-5'-thioadenosine pocket.

The protein belongs to the spermidine/spermine synthase family. Homodimer or homotetramer.

The protein resides in the cytoplasm. The catalysed reaction is S-adenosyl 3-(methylsulfanyl)propylamine + putrescine = S-methyl-5'-thioadenosine + spermidine + H(+). The protein operates within amine and polyamine biosynthesis; spermidine biosynthesis; spermidine from putrescine: step 1/1. Functionally, catalyzes the irreversible transfer of a propylamine group from the amino donor S-adenosylmethioninamine (decarboxy-AdoMet) to putrescine (1,4-diaminobutane) to yield spermidine. This is Polyamine aminopropyltransferase from Xylella fastidiosa (strain M12).